A 224-amino-acid polypeptide reads, in one-letter code: MRCLKSLLAFFTAFPIGGAELSFKCVWALPYVAAPIIAAIPTTLLYLGASPAIAYIALLAATGLHHLDGLADVGDALLVRDREAARRVLEDPRRGTGGIFAVTAVVVTTAAHLHSPLQLLLGEVFSKSTALLFAGFSKSFKPGLGEAFTEAAKRQWPAALPALAVLAYLAPVTTAVSLATSALLYQLAYRHLGGANGDVYGYLLEVSRSAFVIWSAYVPVPTAF.

The next 4 membrane-spanning stretches (helical) occupy residues 21 to 41 (LSFK…AAIP), 44 to 64 (LLYL…ATGL), 97 to 117 (GGIF…HSPL), and 156 to 176 (WPAA…TTAV).

It belongs to the CobS family. Requires Mg(2+) as cofactor.

The protein localises to the cell membrane. It catalyses the reaction alpha-ribazole + adenosylcob(III)inamide-GDP = adenosylcob(III)alamin + GMP + H(+). It carries out the reaction alpha-ribazole 5'-phosphate + adenosylcob(III)inamide-GDP = adenosylcob(III)alamin 5'-phosphate + GMP + H(+). It participates in cofactor biosynthesis; adenosylcobalamin biosynthesis; adenosylcobalamin from cob(II)yrinate a,c-diamide: step 7/7. Functionally, joins adenosylcobinamide-GDP and alpha-ribazole to generate adenosylcobalamin (Ado-cobalamin). Also synthesizes adenosylcobalamin 5'-phosphate from adenosylcobinamide-GDP and alpha-ribazole 5'-phosphate. The protein is Adenosylcobinamide-GDP ribazoletransferase of Pyrobaculum aerophilum (strain ATCC 51768 / DSM 7523 / JCM 9630 / CIP 104966 / NBRC 100827 / IM2).